The primary structure comprises 213 residues: Phospho-2-dehydro-3-deoxyheptonate aldolase, Tyr-sensitive (213 aa).

It belongs to the class-I DAHP synthase family.

It carries out the reaction D-erythrose 4-phosphate + phosphoenolpyruvate + H2O = 7-phospho-2-dehydro-3-deoxy-D-arabino-heptonate + phosphate. Its pathway is metabolic intermediate biosynthesis; chorismate biosynthesis; chorismate from D-erythrose 4-phosphate and phosphoenolpyruvate: step 1/7. In terms of biological role, stereospecific condensation of phosphoenolpyruvate (PEP) and D-erythrose-4-phosphate (E4P) giving rise to 3-deoxy-D-arabino-heptulosonate-7-phosphate (DAHP). The sequence is that of Phospho-2-dehydro-3-deoxyheptonate aldolase, Tyr-sensitive (aroF) from Enterobacter agglomerans (Erwinia herbicola).